Here is a 191-residue protein sequence, read N- to C-terminus: UPF0312 protein Sbal195_3198 (191 aa).

An N-terminal signal peptide occupies residues 1–22; sequence MKKQLFSALIGASLLAPMAASA.

It belongs to the UPF0312 family. Type 1 subfamily.

The protein localises to the periplasm. The protein is UPF0312 protein Sbal195_3198 of Shewanella baltica (strain OS195).